A 712-amino-acid chain; its full sequence is Polyribonucleotide nucleotidyltransferase (712 aa).

Mg(2+)-binding residues include D485 and D491. A KH domain is found at 552 to 615 (PRIHTIKINP…EAIRRIEAIT (64 aa)). Residues 621–689 (NRIYEGKVVR…RQGRVRLSIK (69 aa)) form the S1 motif domain.

The protein belongs to the polyribonucleotide nucleotidyltransferase family. In terms of assembly, component of the RNA degradosome, which is a multiprotein complex involved in RNA processing and mRNA degradation. Requires Mg(2+) as cofactor.

The protein resides in the cytoplasm. The enzyme catalyses RNA(n+1) + phosphate = RNA(n) + a ribonucleoside 5'-diphosphate. Its function is as follows. Involved in mRNA degradation. Catalyzes the phosphorolysis of single-stranded polyribonucleotides processively in the 3'- to 5'-direction. This Aeromonas hydrophila subsp. hydrophila (strain ATCC 7966 / DSM 30187 / BCRC 13018 / CCUG 14551 / JCM 1027 / KCTC 2358 / NCIMB 9240 / NCTC 8049) protein is Polyribonucleotide nucleotidyltransferase.